We begin with the raw amino-acid sequence, 160 residues long: uncharacterized protein (160 aa).

This is an uncharacterized protein from Mycobacterium tuberculosis (strain CDC 1551 / Oshkosh).